The primary structure comprises 436 residues: Chromosomal replication initiator protein DnaA (436 aa).

A domain I, interacts with DnaA modulators region spans residues 1-80 (MSHEAVWQHV…QAPRFELRVV (80 aa)). A domain II region spans residues 80-100 (VPGVVVQEDIFQAAPAEAPRP). The interval 101–317 (KLNPKYTFEN…GALMRAIAFA (217 aa)) is domain III, AAA+ region. Residues glycine 145, glycine 147, lysine 148, and threonine 149 each coordinate ATP. The interval 318 to 436 (SLNGVELTRA…LLRTLREACT (119 aa)) is domain IV, binds dsDNA.

This sequence belongs to the DnaA family. In terms of assembly, oligomerizes as a right-handed, spiral filament on DNA at oriC.

The protein resides in the cytoplasm. Plays an essential role in the initiation and regulation of chromosomal replication. ATP-DnaA binds to the origin of replication (oriC) to initiate formation of the DNA replication initiation complex once per cell cycle. Binds the DnaA box (a 9 base pair repeat at the origin) and separates the double-stranded (ds)DNA. Forms a right-handed helical filament on oriC DNA; dsDNA binds to the exterior of the filament while single-stranded (ss)DNA is stabiized in the filament's interior. The ATP-DnaA-oriC complex binds and stabilizes one strand of the AT-rich DNA unwinding element (DUE), permitting loading of DNA polymerase. After initiation quickly degrades to an ADP-DnaA complex that is not apt for DNA replication. Binds acidic phospholipids. In Thermus thermophilus (strain ATCC BAA-163 / DSM 7039 / HB27), this protein is Chromosomal replication initiator protein DnaA.